The primary structure comprises 385 residues: ELAV-like protein 4 (385 aa).

The disordered stretch occupies residues 12 to 48; sequence TMEPQVSNGPTSNTSNGPSSNNRNCPSPMQTGAATDD. Residues 18–33 show a composition bias toward low complexity; that stretch reads SNGPTSNTSNGPSSNN. Polar residues predominate over residues 34–44; that stretch reads RNCPSPMQTGA. A Phosphoserine modification is found at Ser38. 2 consecutive RRM domains span residues 51–129 and 137–217; these read TNLI…YARP and ANLY…FANN. Position 233 is a phosphoserine (Ser233). Arg248 is subject to Asymmetric dimethylarginine; by CARM1; alternate. Arg248 carries the omega-N-methylarginine; by CARM1; alternate modification. Residues 302 to 380 form the RRM 3 domain; that stretch reads WCIFVYNLSP…RVLQVSFKTN (79 aa).

Belongs to the RRM elav family. In terms of assembly, component of a TAU mRNP complex, at least composed of IGF2BP1, ELAVL4 and G3BP. Associates with the EIF4F cap-binding complex, composed of EIF4G, EIF4A, EIF4E and PABP. Within the EIF4F cap-binding complex, interacts with EIF4A. Interacts with SMN (via Tudor domain) in an RNA-independent manner; the interaction is required for localization of ELAVL4 to RNA granules. Interacts with MAP1 light chain LC1 (via C-terminus); the interaction contributes to the association of ELAVL4 with microtubules. Interacts with MAP1 light chain LC2. Post-translationally, methylated by CARM1, which leads to reduced RNA-binding activity and enhanced interaction with SMN. Methylation at Arg-248 by CARM1 weakens protective binding to the 3'UTR of CDKN1A mRNA and down-regulates CDKN1A protein expression, thereby maintaining cells in a proliferative state. Methylation is inhibited by NGF, which facilitates neurite outgrowth. In terms of tissue distribution, expressed in the brain, including the hippocampus, and in pancreatic beta cells (at protein level). Expressed in pyramidal neurons of the hippocampal CA3 and CA1 region and in the hilus but not in dentate granule cells (at protein level). Expressed in the dorsal root ganglion and the spinal cord (at protein level). Expressed in neural stem and progenitor cells (at protein level). Expressed in radial glia-like cells and in transient amplifying cells in the subventricular zone (SVZ), and in immature neurons both in the SVZ and the rostral migratory stream as well as in mature neurons in the olfactory bulb (at protein level). Expressed in testis and in the brain, including the hippocampus, the neocortex and the cerebellum. Expressed in lower- but not upper-layer primary neurons of the mature neocortex, in the hippocampal regions CA1-3 and the dentate gyrus. Expressed in the mitral and granule cells of the olfactory bulb, cerebral cortex, entorhinal cortex, thalamus, medial habenula, amygdala, granule cells of the cerebellum, pons, olivary nucleus, dorsal and ventral spinal cord and in dorsal root ganglia. Expressed in motor neurons. Isoform 4: Expressed in the brain. Isoform 5: Expressed in the brain. Isoform 6: Expressed in the brain. Isoform 7: Expressed in the brain. Isoform 8: Expressed in the brain. Isoform 9: Expressed in the brain. Isoform 10: Expressed in the brain. Isoform 11: Expressed in the brain.

Its subcellular location is the cytoplasm. It is found in the perikaryon. The protein resides in the cell projection. The protein localises to the dendrite. It localises to the axon. Its subcellular location is the growth cone. Functionally, RNA-binding protein that is involved in the post-transcriptional regulation of mRNAs. Plays a role in the regulation of mRNA stability, alternative splicing and translation. Binds to AU-rich element (ARE) sequences in the 3' untranslated region (3'UTR) of target mRNAs, including GAP43, VEGF, FOS, CDKN1A and ACHE mRNA. Many of the target mRNAs are coding for RNA-binding proteins, transcription factors and proteins involved in RNA processing and/or neuronal development and function. By binding to the mRNA 3'UTR, decreases mRNA deadenylation and thereby contributes to the stabilization of mRNA molecules and their protection from decay. Also binds to the polyadenylated (poly(A)) tail in the 3'UTR of mRNA, thereby increasing its affinity for mRNA binding. Mainly plays a role in neuron-specific RNA processing by stabilization of mRNAs such as GAP43, ACHE and mRNAs of other neuronal proteins, thereby contributing to the differentiation of neural progenitor cells, nervous system development, learning and memory mechanisms. Involved in the negative regulation of the proliferative activity of neuronal stem cells and in the positive regulation of neuronal differentiation of neural progenitor cells. Promotes neuronal differentiation of neural stem/progenitor cells in the adult subventricular zone of the hippocampus by binding to and stabilizing SATB1 mRNA. Binds and stabilizes MSI1 mRNA in neural stem cells. Exhibits increased binding to ACHE mRNA during neuronal differentiation, thereby stabilizing ACHE mRNA and enhancing its expression. Protects CDKN1A mRNA from decay by binding to its 3'-UTR. May bind to APP and BACE1 mRNAS and the BACE1AS lncRNA and enhance their stabilization. Plays a role in neurite outgrowth and in the establishment and maturation of dendritic arbors, thereby contributing to neocortical and hippocampal circuitry function. Stabilizes GAP43 mRNA and protects it from decay during postembryonic development in the brain. By promoting the stabilization of GAP43 mRNA, plays a role in NGF-mediated neurite outgrowth. Binds to BDNF long 3'UTR mRNA, thereby leading to its stabilization and increased dendritic translation after activation of PKC. By increasing translation of BDNF after nerve injury, may contribute to nerve regeneration. Acts as a stabilizing factor by binding to the 3'UTR of NOVA1 mRNA, thereby increasing its translation and enhancing its functional activity in neuron-specific splicing. Stimulates translation of mRNA in a poly(A)- and cap-dependent manner, possibly by associating with the EIF4F cap-binding complex. May also negatively regulate translation by binding to the 5'UTR of Ins2 mRNA, thereby repressing its translation. Upon glucose stimulation, Ins2 mRNA is released from ELAVL4 and translational inhibition is abolished. Also plays a role in the regulation of alternative splicing. May regulate alternative splicing of CALCA pre-mRNA into Calcitonin and Calcitonin gene-related peptide 1 (CGRP) by competing with splicing regulator TIAR for binding to U-rich sequences of CALCA pre-mRNA. In Mus musculus (Mouse), this protein is ELAV-like protein 4 (Elavl4).